A 390-amino-acid chain; its full sequence is Peroxisomal sarcosine oxidase (390 aa).

9–39 contacts FAD; it reads DAIVIGAGIQGCFTAYHLAKHRKRILLLEQF. Lysine 126 carries the N6-acetyllysine modification. S-8alpha-FAD cysteine is present on cysteine 319. Positions 388 to 390 match the Microbody targeting signal motif; sequence AHL.

It belongs to the MSOX/MTOX family. FAD is required as a cofactor. In terms of tissue distribution, expressed in the liver and kidney.

The protein resides in the peroxisome. The catalysed reaction is sarcosine + O2 + H2O = formaldehyde + glycine + H2O2. It catalyses the reaction L-pipecolate + O2 = L-1-piperideine-6-carboxylate + H2O2 + H(+). Functionally, metabolizes sarcosine and L-pipecolic acid. This is Peroxisomal sarcosine oxidase (PIPOX) from Homo sapiens (Human).